Reading from the N-terminus, the 665-residue chain is MSSPHRASTTQQLADLSLTEGEHDEGKPLSIDYLQGHEGLIEEVLKWSEHEQLDFMDKIVHRLSHYQLGKVDNFIRPMLQRDFISNLPAHLVELILFNVNSDSLKSCEEVSTSWRCALARGQHWKKLIEKNVRSDSLWWGLSEKRQWDKFLNISRDMSVRRICEKFNYDVNIKRDKLDQLILMHVFYSKLYPKIIRDIHNIDNNWKRGNYKMTRINCQSENSKGVYCLQYDDDKIVSGLRDNTIKIWDRKDYSCSRILSGHTGSVLCLQYDNRVIISGSSDATVRVWDVETGECIKTLIHHCEAVLHLRFANGIMVTCSKDRSIAVWDMVSPRDITIRRVLVGHRAAVNVVDFDDRYIVSASGDRTIKVWSMDTLEFVRTLAGHRRGIACLQYRGRLVVSGSSDNTIRLWDIHSGVCLRVLEGHEELVRCIRFDEKRIVSGAYDGKIKVWDLQAALDPRALSSEICLCSLVQHTGRVFRLQFDDFQIVSSSHDDTILIWDFLDAPPSGLPSSTNRATLPELPNQAAVARAQMLFEMAARREIERRDREVVEEPALRPRANAARRHNADIAAAAAAAEAARGAGDNDESSSEEDLDRVDQVNNPNVAGPAPPQPHNQNHRRRQPRPELPVRLMQEMAAFDNMRRQQNNMDHLGGGDVDEEMPDGGP.

The F-box domain maps to Arg-81–Leu-127. WD repeat units lie at residues Glu-220–Ile-257, Gly-260–Ile-299, His-301–Ile-337, Gly-343–Thr-380, Gly-383–Val-420, Gly-423–Ala-460, and Gln-472–Leu-509. The interval Ala-574–Pro-665 is disordered. Composition is skewed to acidic residues over residues Asp-584–Asp-595 and Asp-655–Pro-665.

In terms of assembly, part of a SCF (SKP1-cullin-F-box) protein ligase complex.

The protein resides in the cytoplasm. Functionally, functions cell autonomously to negatively regulate cell cycle progression. Required to restrain cell proliferation in response to developmental cues. Probably recognizes and binds to some proteins and promotes their ubiquitination and degradation. This is F-box/WD repeat-containing protein lin-23 (lin-23) from Caenorhabditis elegans.